Here is a 463-residue protein sequence, read N- to C-terminus: NADH dehydrogenase [ubiquinone] iron-sulfur protein 2, mitochondrial (463 aa).

The N-terminal 33 residues, 1–33, are a transit peptide targeting the mitochondrion; that stretch reads MAALRALGGLRGVAAQVLRPGAGVRLPIQPSRG. Lys62 carries the N6-acetyllysine modification. Arg118 carries the symmetric dimethylarginine modification. Residues Cys326, Cys332, and Cys347 each coordinate [4Fe-4S] cluster.

The protein belongs to the complex I 49 kDa subunit family. In terms of assembly, core subunit of respiratory chain NADH dehydrogenase (Complex I) which is composed of 45 different subunits. Component of the iron-sulfur (IP) fragment of the enzyme. Interacts with NDUFAF3. Interacts with NDUFAF7. Interacts with CERS2. [4Fe-4S] cluster serves as cofactor. Dimethylation at Arg-118 by NDUFAF7 takes place after NDUFS2 assembles into the complex I, leading to stabilize the early intermediate complex.

The protein localises to the mitochondrion inner membrane. The catalysed reaction is a ubiquinone + NADH + 5 H(+)(in) = a ubiquinol + NAD(+) + 4 H(+)(out). Its function is as follows. Core subunit of the mitochondrial membrane respiratory chain NADH dehydrogenase (Complex I) which catalyzes electron transfer from NADH through the respiratory chain, using ubiquinone as an electron acceptor. Essential for the catalytic activity and assembly of complex I. Redox-sensitive, critical component of the oxygen-sensing pathway in the pulmonary vasculature which plays a key role in acute pulmonary oxygen-sensing and hypoxic pulmonary vasoconstriction. Plays an important role in carotid body sensing of hypoxia. Essential for glia-like neural stem and progenitor cell proliferation, differentiation and subsequent oligodendrocyte or neuronal maturation. This chain is NADH dehydrogenase [ubiquinone] iron-sulfur protein 2, mitochondrial (NDUFS2), found in Pongo pygmaeus (Bornean orangutan).